Consider the following 214-residue polypeptide: Ras-like protein rasZ (214 aa).

A GTP-binding site is contributed by 16–23 (GDGGVGKT). Positions 38 to 46 (YDPTIEDSY) match the Effector region motif. GTP-binding positions include 63–67 (DTAGQ) and 122–125 (NKSD). Cys-211 carries the post-translational modification Cysteine methyl ester. A lipid anchor (S-geranylgeranyl cysteine) is attached at Cys-211. A propeptide spans 212–214 (KMM) (removed in mature form).

The protein belongs to the small GTPase superfamily. Ras family.

It localises to the cell membrane. The catalysed reaction is GTP + H2O = GDP + phosphate + H(+). Functionally, ras proteins bind GDP/GTP and possess intrinsic GTPase activity. In Dictyostelium discoideum (Social amoeba), this protein is Ras-like protein rasZ (rasZ).